A 184-amino-acid polypeptide reads, in one-letter code: ATP synthase subunit b, chloroplastic (184 aa).

A helical transmembrane segment spans residues 27–49 (LATNPINLSVVLGVLIFFGKGVL).

Belongs to the ATPase B chain family. In terms of assembly, F-type ATPases have 2 components, F(1) - the catalytic core - and F(0) - the membrane proton channel. F(1) has five subunits: alpha(3), beta(3), gamma(1), delta(1), epsilon(1). F(0) has four main subunits: a(1), b(1), b'(1) and c(10-14). The alpha and beta chains form an alternating ring which encloses part of the gamma chain. F(1) is attached to F(0) by a central stalk formed by the gamma and epsilon chains, while a peripheral stalk is formed by the delta, b and b' chains.

The protein resides in the plastid. It is found in the chloroplast thylakoid membrane. In terms of biological role, f(1)F(0) ATP synthase produces ATP from ADP in the presence of a proton or sodium gradient. F-type ATPases consist of two structural domains, F(1) containing the extramembraneous catalytic core and F(0) containing the membrane proton channel, linked together by a central stalk and a peripheral stalk. During catalysis, ATP synthesis in the catalytic domain of F(1) is coupled via a rotary mechanism of the central stalk subunits to proton translocation. Functionally, component of the F(0) channel, it forms part of the peripheral stalk, linking F(1) to F(0). The sequence is that of ATP synthase subunit b, chloroplastic from Populus alba (White poplar).